Consider the following 157-residue polypeptide: MSQVILDLQLACEETSGLPDEALFQRWVDAVIPPFQEESELTIRLVDVAESHELNLTYRGKDKPTNVLSFPFEAPPGIEMPLLGDLIICRQVVEQEASEQGKPLEAHWAHMVVHGSLHLLGYDHIEDDEAEEMEGLETEIMLALGYEDPYISEKIAE.

Residues histidine 114, histidine 118, and histidine 124 each contribute to the Zn(2+) site.

The protein belongs to the endoribonuclease YbeY family. Requires Zn(2+) as cofactor.

It localises to the cytoplasm. Its function is as follows. Single strand-specific metallo-endoribonuclease involved in late-stage 70S ribosome quality control and in maturation of the 3' terminus of the 16S rRNA. The chain is Endoribonuclease YbeY from Klebsiella pneumoniae (strain 342).